Reading from the N-terminus, the 137-residue chain is Gonadotropin subunit beta-1 (137 aa).

The signal sequence occupies residues 1–24; the sequence is MYCTHLKTLQLVVMATLWVTPVRA. 5 disulfides stabilise this stretch: Cys-32-Cys-78, Cys-46-Cys-93, Cys-55-Cys-108, Cys-59-Cys-110, and Cys-113-Cys-120. Asn-36 carries an N-linked (GlcNAc...) asparagine glycan.

Belongs to the glycoprotein hormones subunit beta family. As to quaternary structure, heterodimer of an alpha and a beta chain.

The protein localises to the secreted. Its function is as follows. Involved in gametogenesis and steroidogenesis. This is Gonadotropin subunit beta-1 (cgba) from Oncorhynchus masou (Cherry salmon).